The primary structure comprises 486 residues: Cysteine--tRNA ligase (486 aa).

C29 contributes to the Zn(2+) binding site. Positions 31–41 match the 'HIGH' region motif; that stretch reads VTVYDYCHLGH. The Zn(2+) site is built by C214, H239, and E243. The 'KMSKS' region signature appears at 271–275; that stretch reads KMSKS. K274 contributes to the ATP binding site.

The protein belongs to the class-I aminoacyl-tRNA synthetase family. As to quaternary structure, monomer. Requires Zn(2+) as cofactor.

It localises to the cytoplasm. It catalyses the reaction tRNA(Cys) + L-cysteine + ATP = L-cysteinyl-tRNA(Cys) + AMP + diphosphate. The protein is Cysteine--tRNA ligase of Nostoc sp. (strain PCC 7120 / SAG 25.82 / UTEX 2576).